Reading from the N-terminus, the 439-residue chain is tRNA modification GTPase MnmE (439 aa).

(6S)-5-formyl-5,6,7,8-tetrahydrofolate is bound by residues R23, E80, and K120. The 149-residue stretch at 217–365 (GLKIVIAGEP…LLTALQSHLP (149 aa)) folds into the TrmE-type G domain. Position 227 (N227) interacts with K(+). GTP-binding positions include 227 to 232 (NAGKSS), 246 to 252 (TEVAGTT), and 271 to 274 (DTAG). S231 contributes to the Mg(2+) binding site. K(+)-binding residues include T246, V248, and T251. T252 provides a ligand contact to Mg(2+). K439 is a (6S)-5-formyl-5,6,7,8-tetrahydrofolate binding site.

It belongs to the TRAFAC class TrmE-Era-EngA-EngB-Septin-like GTPase superfamily. TrmE GTPase family. Homodimer. Heterotetramer of two MnmE and two MnmG subunits. K(+) serves as cofactor.

It is found in the cytoplasm. In terms of biological role, exhibits a very high intrinsic GTPase hydrolysis rate. Involved in the addition of a carboxymethylaminomethyl (cmnm) group at the wobble position (U34) of certain tRNAs, forming tRNA-cmnm(5)s(2)U34. The sequence is that of tRNA modification GTPase MnmE from Rhizobium meliloti (strain 1021) (Ensifer meliloti).